The sequence spans 494 residues: NADH-quinone oxidoreductase subunit N (494 aa).

Transmembrane regions (helical) follow at residues 9–29 (VIPE…DLFL), 36–56 (LTYV…LSDF), 73–93 (PMSN…LVYS), 107–127 (LGGE…VMMS), 131–151 (FLII…LVAF), 166–186 (FVLG…LYGA), 209–229 (LIFG…AVPF), 241–261 (PTAV…AITI), 278–298 (MLTI…IMQT), 304–324 (LAYS…SGVV), 339–359 (MFYV…IMLL), 382–402 (FAFV…VVGF), 416–436 (GQIW…FYYL), and 469–489 (ALLA…AAII).

This sequence belongs to the complex I subunit 2 family. In terms of assembly, NDH-1 is composed of 14 different subunits. Subunits NuoA, H, J, K, L, M, N constitute the membrane sector of the complex.

Its subcellular location is the cell inner membrane. The catalysed reaction is a quinone + NADH + 5 H(+)(in) = a quinol + NAD(+) + 4 H(+)(out). In terms of biological role, NDH-1 shuttles electrons from NADH, via FMN and iron-sulfur (Fe-S) centers, to quinones in the respiratory chain. The immediate electron acceptor for the enzyme in this species is believed to be ubiquinone. Couples the redox reaction to proton translocation (for every two electrons transferred, four hydrogen ions are translocated across the cytoplasmic membrane), and thus conserves the redox energy in a proton gradient. This chain is NADH-quinone oxidoreductase subunit N, found in Herminiimonas arsenicoxydans.